Consider the following 61-residue polypeptide: [Thr6]-bradykinyl-Val,Asp (61 aa).

A signal peptide spans 1 to 22 (MSFLKKSLFLVLFLGLVSFSIC). A propeptide spanning residues 23–50 (EEEKRETEEEENEDEMDKESEEKRESPE) is cleaved from the precursor. The disordered stretch occupies residues 24-61 (EEKRETEEEENEDEMDKESEEKRESPERPPGFTPFRVD). The span at 30-41 (EEEENEDEMDKE) shows a compositional bias: acidic residues. Residue Pro-53 is modified to 4-hydroxyproline; in form [Hyp3,Thr6]-bradykinyl-Val,Asp and [Hyp3,Thr6]-bradykinin.

Belongs to the frog skin active peptide (FSAP) family. Bradykinin-related peptide subfamily. Expressed by the skin glands.

It is found in the secreted. Induces relaxation of rat smooth muscle from tail artery (EC(50)=16.8 nM) and contraction of that from ileum (EC(50)=205 nM), urinary bladder (EC(50)=895 nM) and uterus (EC(50)=60.3 nM). Binds to both bradykinin receptor B1 (BDKRB1) and B2 (BDKRB2). Its function is as follows. [Hyp3,Thr6]-bradykinin: Induces relaxation of rat smooth muscle from tail artery (EC(50)=56.7 nM) and contraction of that from ileum (EC(50)=588 nM), urinary bladder (EC(50)=4.6 uM) and uterus (EC(50)=3.9 nM). Binds to both bradykinin receptor B1 (BDKRB1) and B2 (BDKRB2). In arterial smooth muscle, the effect via BDKRB1 is stronger, in uterus, ileum and urinary bladder that via BDKRB2. Functionally, induces relaxation of rat smooth muscle from tail artery (EC(50)=10.8 nM) and contraction of that from ileum (EC(50)=645 nM), urinary bladder (EC(50)=1.1 uM) and uterus (EC(50)=1.2 uM). Binds to both bradykinin receptor B1 (BDKRB1) and B2 (BDKRB2). Apart from uterus smooth muscle, the effect via B2 is stronger. In terms of biological role, [Hyp3,Thr6]-bradykinyl-Val,Asp: Induces relaxation of rat smooth muscle from tail artery (EC(50)=3.5 nM) and contraction of that from ileum (EC(50)=223 nM), urinary bladder (EC(50)=1.5 uM) and uterus (EC(50)=356 nM). Binds to both bradykinin receptor B1 (BDKRB1) and B2 (BDKRB2); the effects via B2 a stronger. The sequence is that of [Thr6]-bradykinyl-Val,Asp from Agalychnis callidryas (Red-eyed tree frog).